Consider the following 549-residue polypeptide: Nectin-3 (549 aa).

Positions 1 to 57 are cleaved as a signal peptide; sequence MARTLRPSPLCPGGGKAQLSSASLLGAGLLLQPPTPPPLLLLLFPLLLFSRLCGALA. At 58-404 the chain is on the extracellular side; it reads GPIIVEPHVT…ATIKDDTIAT (347 aa). The Ig-like V-type domain maps to 59-165; sequence PIIVEPHVTA…GNAQSSTTVT (107 aa). 6 N-linked (GlcNAc...) asparagine glycosylation sites follow: Asn73, Asn83, Asn125, Asn186, Asn222, and Asn331. The cysteines at positions 78 and 148 are disulfide-linked. 2 Ig-like C2-type domains span residues 170–258 and 269–354; these read PTVS…KDIR and PEVS…KVIY. 2 disulfide bridges follow: Cys193–Cys246 and Cys291–Cys338. Residues 405 to 425 traverse the membrane as a helical segment; the sequence is IIASVVGGALFIVLVSVLAGI. The Cytoplasmic portion of the chain corresponds to 426-549; it reads FCYRRRRTFR…SVISRREWYV (124 aa).

Belongs to the nectin family. Cis- and trans-homodimer. Can form trans-heterodimers with NECTIN1, NECTIN2, PVR, IGSF4B/Necl-1 and with IGSF4. Interaction between NECTIN1 and NECTIN3 on the pre- and postsynaptic sites, respectively, initiates the formation of puncta adherentia junctions between axons and dendrites. Interacts (via Cytoplasmic domain) with AFDN, providing a connection with the actin cytoskeleton. Binds with low affinity to TIGIT. In terms of assembly, (Microbial infection) Interacts with C.difficile toxin TcdB, suggesting that it may contribute to TcdB toxin entry into cells. It was however shown that NECTIN3/PVRL3 does not act as a major receptor for TcdB. Predominantly expressed in testis and placenta as well as in many cell lines, including epithelial cell lines.

It is found in the cell membrane. The protein localises to the postsynaptic cell membrane. Its subcellular location is the cell junction. It localises to the adherens junction. In terms of biological role, cell adhesion molecule that promotes cell-cell adhesion through heterophilic trans-interactions with nectins-like or other nectins, such as trans-interaction with NECTIN2 at Sertoli-spermatid junctions. Trans-interaction with PVR induces activation of CDC42 and RAC small G proteins through common signaling molecules such as SRC and RAP1. Induces endocytosis-mediated down-regulation of PVR from the cell surface, resulting in reduction of cell movement and proliferation. Involved in axon guidance by promoting contacts between the commissural axons and the floor plate cells. Also involved in the formation of cell-cell junctions, including adherens junctions and synapses. Promotes formation of checkerboard-like cellular pattern of hair cells and supporting cells in the auditory epithelium via heterophilic interaction with NECTIN1: NECTIN1 is present in the membrane of hair cells and associates with NECTIN3 on supporting cells, thereby mediating heterotypic adhesion between these two cell types. Plays a role in the morphology of the ciliary body. This Homo sapiens (Human) protein is Nectin-3.